The following is a 124-amino-acid chain: Small ribosomal subunit protein bS6 (124 aa).

Residues 96-124 (ETAPSPMMKEVQREEARKAAQTTTEGQAA) form a disordered region. Residues 115-124 (AQTTTEGQAA) show a composition bias toward polar residues.

Belongs to the bacterial ribosomal protein bS6 family.

In terms of biological role, binds together with bS18 to 16S ribosomal RNA. This is Small ribosomal subunit protein bS6 from Cupriavidus necator (strain ATCC 17699 / DSM 428 / KCTC 22496 / NCIMB 10442 / H16 / Stanier 337) (Ralstonia eutropha).